The sequence spans 103 residues: Large ribosomal subunit protein uL23 (103 aa).

This sequence belongs to the universal ribosomal protein uL23 family. Part of the 50S ribosomal subunit. Contacts protein L29, and trigger factor when it is bound to the ribosome.

Its function is as follows. One of the early assembly proteins it binds 23S rRNA. One of the proteins that surrounds the polypeptide exit tunnel on the outside of the ribosome. Forms the main docking site for trigger factor binding to the ribosome. This is Large ribosomal subunit protein uL23 from Chlorobium luteolum (strain DSM 273 / BCRC 81028 / 2530) (Pelodictyon luteolum).